Consider the following 223-residue polypeptide: N-(5'-phosphoribosyl)anthranilate isomerase (223 aa).

This sequence belongs to the TrpF family.

It carries out the reaction N-(5-phospho-beta-D-ribosyl)anthranilate = 1-(2-carboxyphenylamino)-1-deoxy-D-ribulose 5-phosphate. Its pathway is amino-acid biosynthesis; L-tryptophan biosynthesis; L-tryptophan from chorismate: step 3/5. This Bradyrhizobium diazoefficiens (strain JCM 10833 / BCRC 13528 / IAM 13628 / NBRC 14792 / USDA 110) protein is N-(5'-phosphoribosyl)anthranilate isomerase.